The following is a 281-amino-acid chain: MFAQALHWLTTSKLRYALALPFLFFILYTKTKKSKEQELENYIFSLPREKLDQIRGKPDEVINVIDEYVEQGHFLMNIGKLKGKIISEKIQQVKPKVMIELGGYVGYSAILFGKQLTDPSAHYYSLEVNPKFAKIASKIIDLAGLSNKVTIIVGKATDSLVELRRSLPNVIPSFEYLDFVFIDHWKDLYVPDLRVMETLDLIGQGSIIAADNILRPGVPEYVKYVQGSLDYRKEYDSTVSNVNGPQFIGKWNIIYKSKTIKVDDGKREKDAVEITEYIEAK.

S-adenosyl-L-methionine contacts are provided by isoleucine 78, glutamate 100, serine 108, glutamate 127, valine 128, alanine 156, and aspartate 183. Residue aspartate 183 coordinates Mg(2+). Substrate is bound at residue lysine 186. Mg(2+)-binding residues include aspartate 211 and asparagine 212. A substrate-binding site is contributed by asparagine 212.

This sequence belongs to the class I-like SAM-binding methyltransferase superfamily. Cation-dependent O-methyltransferase family. It depends on Mg(2+) as a cofactor.

The protein resides in the vacuole. The catalysed reaction is a catechol + S-adenosyl-L-methionine = a guaiacol + S-adenosyl-L-homocysteine + H(+). This chain is Probable catechol O-methyltransferase 2, found in Schizosaccharomyces pombe (strain 972 / ATCC 24843) (Fission yeast).